Here is a 232-residue protein sequence, read N- to C-terminus: MFALGDLNLTYLVSITAVSLYVSTAAVALSAALGLPISLAVGFRDFYGKSVVTSVISTGMGFPSVVVGLVVLLVLSRSGPLGTFELLFTPEAMILSQTILALPVLVSVSLSAVQSVPQDLRDAAFAAGGTSTDIALLVVREARYGIVTALLAAYGRAISEVGSVLIVGGNIVFSDSTSFTRTLTTAITVEARKGNIETGIALGAILLALVLGVNALGARFRDRTPGRNGRGR.

Positions 16 to 217 constitute an ABC transmembrane type-1 domain; that stretch reads TAVSLYVSTA…ALVLGVNALG (202 aa). A run of 5 helical transmembrane segments spans residues 23–43, 55–75, 93–113, 146–166, and 198–218; these read STAAVALSAALGLPISLAVGF, VISTGMGFPSVVVGLVVLLVL, MILSQTILALPVLVSVSLSAV, IVTALLAAYGRAISEVGSVLI, and TGIALGAILLALVLGVNALGA.

This sequence belongs to the binding-protein-dependent transport system permease family. In terms of assembly, the complex is composed of two ATP-binding proteins (HVO_1886), two transmembrane proteins (HVO_1887) and a solute-binding protein (HVO_1888).

The protein resides in the cell membrane. Its function is as follows. Part of an ABC transporter complex involved in anions import. Responsible for the translocation of the substrate across the membrane. This Haloferax volcanii (strain ATCC 29605 / DSM 3757 / JCM 8879 / NBRC 14742 / NCIMB 2012 / VKM B-1768 / DS2) (Halobacterium volcanii) protein is Probable anion ABC transporter permease protein HVO_1887.